We begin with the raw amino-acid sequence, 437 residues long: Epsilon-sarcoglycan (437 aa).

The Extracellular portion of the chain corresponds to methionine 1 to phenylalanine 317. Asparagine 200 carries an N-linked (GlcNAc...) asparagine glycan. Residues leucine 318 to isoleucine 338 form a helical membrane-spanning segment. The Cytoplasmic segment spans residues methionine 339 to proline 437.

It belongs to the sarcoglycan alpha/epsilon family. Post-translationally, N-glycosylated. In terms of processing, ubiquitinated, leading to its degradation by the proteasome. As to expression, ubiquitous.

It localises to the cell membrane. The protein resides in the sarcolemma. The protein localises to the cytoplasm. Its subcellular location is the cytoskeleton. It is found in the cell projection. It localises to the dendrite. The protein resides in the golgi apparatus. Its function is as follows. Component of the sarcoglycan complex, a subcomplex of the dystrophin-glycoprotein complex which forms a link between the F-actin cytoskeleton and the extracellular matrix. The chain is Epsilon-sarcoglycan (SGCE) from Homo sapiens (Human).